A 204-amino-acid chain; its full sequence is Probable proteasome subunit beta type-3 (204 aa).

It belongs to the peptidase T1B family. As to quaternary structure, the 26S proteasome consists of a 20S proteasome core and two 19S regulatory subunits. The 20S proteasome core is composed of 28 subunits that are arranged in four stacked rings, resulting in a barrel-shaped structure. The two end rings are each formed by seven alpha subunits, and the two central rings are each formed by seven beta subunits. The catalytic chamber with the active sites is on the inside of the barrel.

Its subcellular location is the cytoplasm. It localises to the nucleus. Its function is as follows. Non-catalytic component of the proteasome, a multicatalytic proteinase complex which is characterized by its ability to cleave peptides with Arg, Phe, Tyr, Leu, and Glu adjacent to the leaving group at neutral or slightly basic pH. The proteasome has an ATP-dependent proteolytic activity. This chain is Probable proteasome subunit beta type-3 (pup3), found in Schizosaccharomyces pombe (strain 972 / ATCC 24843) (Fission yeast).